The following is a 295-amino-acid chain: Acetyl-coenzyme A carboxylase carboxyl transferase subunit beta (295 aa).

The tract at residues Met1–Lys20 is disordered. Residues Leu28–Ala295 enclose the CoA carboxyltransferase N-terminal domain. Zn(2+) contacts are provided by Cys32, Cys35, Cys51, and Cys54. A C4-type zinc finger spans residues Cys32–Cys54.

Belongs to the AccD/PCCB family. As to quaternary structure, acetyl-CoA carboxylase is a heterohexamer composed of biotin carboxyl carrier protein (AccB), biotin carboxylase (AccC) and two subunits each of ACCase subunit alpha (AccA) and ACCase subunit beta (AccD). It depends on Zn(2+) as a cofactor.

The protein resides in the cytoplasm. The catalysed reaction is N(6)-carboxybiotinyl-L-lysyl-[protein] + acetyl-CoA = N(6)-biotinyl-L-lysyl-[protein] + malonyl-CoA. The protein operates within lipid metabolism; malonyl-CoA biosynthesis; malonyl-CoA from acetyl-CoA: step 1/1. In terms of biological role, component of the acetyl coenzyme A carboxylase (ACC) complex. Biotin carboxylase (BC) catalyzes the carboxylation of biotin on its carrier protein (BCCP) and then the CO(2) group is transferred by the transcarboxylase to acetyl-CoA to form malonyl-CoA. The protein is Acetyl-coenzyme A carboxylase carboxyl transferase subunit beta of Xanthomonas oryzae pv. oryzae (strain MAFF 311018).